We begin with the raw amino-acid sequence, 594 residues long: Adenine deaminase 1 (594 aa).

Belongs to the metallo-dependent hydrolases superfamily. Adenine deaminase family. Requires Mn(2+) as cofactor.

The enzyme catalyses adenine + H2O + H(+) = hypoxanthine + NH4(+). This chain is Adenine deaminase 1, found in Jannaschia sp. (strain CCS1).